The following is a 249-amino-acid chain: Phosphate import ATP-binding protein PstB 1 (249 aa).

The ABC transporter domain occupies 4 to 244; it reads FNIENLDLFY…PKDDRTQGYV (241 aa). Residue 36-43 participates in ATP binding; the sequence is GPSGCGKS.

Belongs to the ABC transporter superfamily. Phosphate importer (TC 3.A.1.7) family. The complex is composed of two ATP-binding proteins (PstB), two transmembrane proteins (PstC and PstA) and a solute-binding protein (PstS).

It is found in the cell inner membrane. The catalysed reaction is phosphate(out) + ATP + H2O = ADP + 2 phosphate(in) + H(+). Functionally, part of the ABC transporter complex PstSACB involved in phosphate import. Responsible for energy coupling to the transport system. The sequence is that of Phosphate import ATP-binding protein PstB 1 from Aliivibrio fischeri (strain ATCC 700601 / ES114) (Vibrio fischeri).